Reading from the N-terminus, the 355-residue chain is 3-isopropylmalate dehydrogenase (355 aa).

Gly-77–Glu-90 is an NAD(+) binding site. Positions 97, 107, 135, and 220 each coordinate substrate. Positions 220, 244, and 248 each coordinate Mg(2+). Position 277 to 289 (Gly-277 to Asn-289) interacts with NAD(+).

Belongs to the isocitrate and isopropylmalate dehydrogenases family. LeuB type 1 subfamily. Homodimer. Requires Mg(2+) as cofactor. Mn(2+) serves as cofactor.

The protein resides in the cytoplasm. It carries out the reaction (2R,3S)-3-isopropylmalate + NAD(+) = 4-methyl-2-oxopentanoate + CO2 + NADH. Its pathway is amino-acid biosynthesis; L-leucine biosynthesis; L-leucine from 3-methyl-2-oxobutanoate: step 3/4. Functionally, catalyzes the oxidation of 3-carboxy-2-hydroxy-4-methylpentanoate (3-isopropylmalate) to 3-carboxy-4-methyl-2-oxopentanoate. The product decarboxylates to 4-methyl-2 oxopentanoate. This chain is 3-isopropylmalate dehydrogenase, found in Sulfurimonas denitrificans (strain ATCC 33889 / DSM 1251) (Thiomicrospira denitrificans (strain ATCC 33889 / DSM 1251)).